A 244-amino-acid polypeptide reads, in one-letter code: Claudin-12 (244 aa).

Residues 1-10 (MGCRDVHAAT) are Cytoplasmic-facing. A helical transmembrane segment spans residues 11–31 (VLSFLCGIASVAGLFAGTLLP). The Extracellular segment spans residues 32-87 (NWRKLRLITFNRNEKNLTVYTGLWVKCARYDGGNDCLMYDAAWYSSVDQLDLRVLQ). Residues 88–108 (FALPLSILIAMGALLLCLIGM) form a helical membrane-spanning segment. The Cytoplasmic portion of the chain corresponds to 109 to 135 (CNTAFRSSVPNIKLAKCLVNSAGCHLV). A helical transmembrane segment spans residues 136–156 (AGLLFFLAGTVSLSPSIWVIF). Over 157–174 (YNIHLNRKFEPVFAFDYA) the chain is Extracellular. Residues 175-195 (VYVTVASAGGLFMTALLLFIW) traverse the membrane as a helical segment. At 196–244 (YCACKSLPSPFWQPLYSHPPGMHTYSQPYSARSRLSAIEIDIPVVSHTT) the chain is on the cytoplasmic side. A phosphoserine mark is found at S228 and S231.

Belongs to the claudin family. In terms of assembly, interacts with OCLN.

It is found in the cell junction. Its subcellular location is the tight junction. The protein localises to the cell membrane. Its function is as follows. Plays a major role in tight junction-specific obliteration of the intercellular space, through calcium-independent cell-adhesion activity. In Bos taurus (Bovine), this protein is Claudin-12 (CLDN12).